The chain runs to 422 residues: Carboxypeptidase B2 (422 aa).

Positions 1 to 21 are cleaved as a signal peptide; it reads MKLHGLGILVAIILYEQHGFA. Positions 22-113 are cleaved as a propeptide — activation peptide; the sequence is FQSGQVLSAL…QTFNDTVSPR (92 aa). Residues Asn-43, Asn-72, Asn-84, and Asn-107 are each glycosylated (N-linked (GlcNAc...) asparagine). Residues 121-418 form the Peptidase M14 domain; it reads QYHSLNEIYS…AAISKIVWHV (298 aa). An intrachain disulfide couples Cys-177 to Cys-190. The Zn(2+) site is built by His-180 and Glu-183. Residues 180–183 and Arg-238 contribute to the substrate site; that span reads HARE. Asn-240 is a glycosylation site (N-linked (GlcNAc...) asparagine). Cystine bridges form between Cys-249-Cys-273 and Cys-264-Cys-278. 255–256 provides a ligand contact to substrate; the sequence is NR. His-309 contributes to the Zn(2+) binding site. Residue 310–311 coordinates substrate; sequence SY. The N-linked (GlcNAc...) asparagine glycan is linked to Asn-322. Tyr-362 contacts substrate. Residue Glu-384 is the Proton donor/acceptor of the active site.

Belongs to the peptidase M14 family. Zn(2+) serves as cofactor. Plasma; synthesized in the liver.

The protein localises to the secreted. The catalysed reaction is Release of C-terminal Arg and Lys from a polypeptide.. With respect to regulation, TAFI/CPB2 is unique among carboxypeptidases in that it spontaneously inactivates with a short half-life, a property that is crucial for its role in controlling blood clot lysis. The zymogen is stabilized by interactions with the activation peptide. Release of the activation peptide increases a dynamic flap mobility and in time this leads to conformational changes that disrupt the catalytic site and expose a cryptic thrombin-cleavage site present at Arg-323. Cleaves C-terminal arginine or lysine residues from biologically active peptides such as kinins or anaphylatoxins in the circulation thereby regulating their activities. Down-regulates fibrinolysis by removing C-terminal lysine residues from fibrin that has already been partially degraded by plasmin. In Mus musculus (Mouse), this protein is Carboxypeptidase B2 (Cpb2).